We begin with the raw amino-acid sequence, 266 residues long: Isoprenyl transferase (266 aa).

The active site involves Asp-36. A Mg(2+)-binding site is contributed by Asp-36. Substrate contacts are provided by residues 37-40 (GNGR), Trp-41, Arg-49, His-53, and 81-83 (STE). Asn-84 (proton acceptor) is an active-site residue. Substrate-binding positions include Trp-85, Arg-87, Arg-204, and 210 to 212 (RIS). Glu-223 serves as a coordination point for Mg(2+).

The protein belongs to the UPP synthase family. As to quaternary structure, homodimer. Mg(2+) is required as a cofactor.

Catalyzes the condensation of isopentenyl diphosphate (IPP) with allylic pyrophosphates generating different type of terpenoids. This Prochlorococcus marinus (strain SARG / CCMP1375 / SS120) protein is Isoprenyl transferase.